Consider the following 505-residue polypeptide: Sucrose porin (505 aa).

The N-terminal stretch at Met1–Gly22 is a signal peptide. The tract at residues Glu44 to Gly94 is disordered. Residues Arg46–Thr82 are compositionally biased toward low complexity. Over residues Thr83–Gly93 the composition is skewed to basic and acidic residues.

Belongs to the porin LamB (TC 1.B.3) family. As to quaternary structure, homotrimer.

The protein localises to the cell outer membrane. Functionally, porin for sucrose uptake. In Klebsiella pneumoniae, this protein is Sucrose porin (scrY).